The sequence spans 258 residues: Phosphate import ATP-binding protein PstB (258 aa).

Positions 13-253 (IEVENLNLWY…PKEQSTEDYI (241 aa)) constitute an ABC transporter domain. Position 45–52 (45–52 (GPSGCGKS)) interacts with ATP.

This sequence belongs to the ABC transporter superfamily. Phosphate importer (TC 3.A.1.7) family. As to quaternary structure, the complex is composed of two ATP-binding proteins (PstB), two transmembrane proteins (PstC and PstA) and a solute-binding protein (PstS).

The protein resides in the cell membrane. The enzyme catalyses phosphate(out) + ATP + H2O = ADP + 2 phosphate(in) + H(+). Functionally, part of the ABC transporter complex PstSACB involved in phosphate import. Responsible for energy coupling to the transport system. The protein is Phosphate import ATP-binding protein PstB of Methanosarcina acetivorans (strain ATCC 35395 / DSM 2834 / JCM 12185 / C2A).